The sequence spans 492 residues: 2-succinylbenzoate--CoA ligase (492 aa).

It belongs to the ATP-dependent AMP-binding enzyme family. MenE subfamily.

It catalyses the reaction 2-succinylbenzoate + ATP + CoA = 2-succinylbenzoyl-CoA + AMP + diphosphate. It functions in the pathway quinol/quinone metabolism; 1,4-dihydroxy-2-naphthoate biosynthesis; 1,4-dihydroxy-2-naphthoate from chorismate: step 5/7. Its pathway is quinol/quinone metabolism; menaquinone biosynthesis. Its function is as follows. Converts 2-succinylbenzoate (OSB) to 2-succinylbenzoyl-CoA (OSB-CoA). The chain is 2-succinylbenzoate--CoA ligase from Staphylococcus aureus (strain Mu3 / ATCC 700698).